Reading from the N-terminus, the 219-residue chain is Thiopurine S-methyltransferase (219 aa).

Positions 10, 45, 66, and 123 each coordinate S-adenosyl-L-methionine.

It belongs to the class I-like SAM-binding methyltransferase superfamily. TPMT family.

Its subcellular location is the cytoplasm. It catalyses the reaction S-adenosyl-L-methionine + a thiopurine = S-adenosyl-L-homocysteine + a thiopurine S-methylether.. The sequence is that of Thiopurine S-methyltransferase from Bordetella bronchiseptica (strain ATCC BAA-588 / NCTC 13252 / RB50) (Alcaligenes bronchisepticus).